A 277-amino-acid chain; its full sequence is Small ribosomal subunit protein uS2 (277 aa).

Residues 226 to 277 (GQQARADRGEDLGAAVEPVAEPALVEEAAAPVTEDEQVPAEAAAETERQSDA) form a disordered region. Positions 239–257 (AAVEPVAEPALVEEAAAPV) are enriched in low complexity.

The protein belongs to the universal ribosomal protein uS2 family.

In Sphingopyxis alaskensis (strain DSM 13593 / LMG 18877 / RB2256) (Sphingomonas alaskensis), this protein is Small ribosomal subunit protein uS2.